Reading from the N-terminus, the 231-residue chain is Putative 3-methyladenine DNA glycosylase (231 aa).

It belongs to the DNA glycosylase MPG family.

The chain is Putative 3-methyladenine DNA glycosylase from Pseudomonas fluorescens (strain Pf0-1).